Reading from the N-terminus, the 348-residue chain is (+)-germacrene D synthase (348 aa).

The Mg(2+) site is built by Asp-97, Asp-101, Asn-242, and Ser-246. Positions Asp-97–Asp-101 match the DDXXD motif motif.

This sequence belongs to the terpene synthase family. It depends on Mg(2+) as a cofactor.

It catalyses the reaction (2E,6E)-farnesyl diphosphate = (+)-germacrene D + diphosphate. The protein operates within secondary metabolite biosynthesis; terpenoid biosynthesis. In terms of biological role, sesquiterpene synthase converting farnesyl diphosphate to eight sesquiterpenes, with (+)-germacrene D and an unidentified oxygenated sesquiterpene as the major products. Has no diterpene synthase activity. The sequence is that of (+)-germacrene D synthase from Selaginella moellendorffii (Spikemoss).